The following is a 633-amino-acid chain: Breast carcinoma-amplified sequence 1 homolog (633 aa).

2 disordered regions span residues 1–34 (MGNQMSVPLRPGDQEHDPGADTCKVTSDNECVQN) and 57–422 (SSKD…KLFW). Polar residues-rich tracts occupy residues 24–34 (KVTSDNECVQN) and 57–68 (SSKDNVATSSPK). At S127 the chain carries Phosphoserine. A compositionally biased stretch (polar residues) spans 278–288 (VDTTENSSSIM). Residues 300–318 (TETKKDPEDTKATKADSVC) show a composition bias toward basic and acidic residues. At S328 the chain carries Phosphoserine. The residue at position 330 (T330) is a Phosphothreonine. Residues 359 to 378 (NSPTTSANLKSDKANFTPQE) show a composition bias toward polar residues. A Phosphoserine modification is found at S360. Residues 400-410 (SEGRDSGKEKA) show a composition bias toward basic and acidic residues. 2 positions are modified to phosphoserine: S425 and S443. The segment at 454 to 633 (ESSLQTVDLS…VSIGPVGKSK (180 aa)) is disordered. Residues 471-481 (TDVKVKEESKP) show a composition bias toward basic and acidic residues. Polar residues predominate over residues 510–522 (KDSSCQTSNSVEK). At T523 the chain carries Phosphothreonine. S525 is modified (phosphoserine). The segment covering 537–555 (KNKETSSSKDKKSVDKKSA) has biased composition (basic and acidic residues). 2 positions are modified to phosphoserine: S601 and S615. Residues 614 to 633 (MSDAQVQTDPVSIGPVGKSK) are interacts with DYNLL1 AND DYNLL2.

Homodimer. Interacts with DYNLL1 and DYNLL2. Highly expressed in the brain and, more specifically, in oligodendrocytes. Expressed in the Schwann cells (at protein level).

Its subcellular location is the cytoplasm. In terms of biological role, required for myelination. In Mus musculus (Mouse), this protein is Breast carcinoma-amplified sequence 1 homolog (Bcas1).